The primary structure comprises 477 residues: Methylenetetrahydrofolate--tRNA-(uracil-5-)-methyltransferase TrmFO (477 aa).

15–20 (GAGLAG) contacts FAD.

It belongs to the MnmG family. TrmFO subfamily. It depends on FAD as a cofactor.

The protein localises to the cytoplasm. It catalyses the reaction uridine(54) in tRNA + (6R)-5,10-methylene-5,6,7,8-tetrahydrofolate + NADH + H(+) = 5-methyluridine(54) in tRNA + (6S)-5,6,7,8-tetrahydrofolate + NAD(+). The enzyme catalyses uridine(54) in tRNA + (6R)-5,10-methylene-5,6,7,8-tetrahydrofolate + NADPH + H(+) = 5-methyluridine(54) in tRNA + (6S)-5,6,7,8-tetrahydrofolate + NADP(+). Catalyzes the folate-dependent formation of 5-methyl-uridine at position 54 (M-5-U54) in all tRNAs. The polypeptide is Methylenetetrahydrofolate--tRNA-(uracil-5-)-methyltransferase TrmFO (Nitrobacter winogradskyi (strain ATCC 25391 / DSM 10237 / CIP 104748 / NCIMB 11846 / Nb-255)).